Consider the following 242-residue polypeptide: Caffeoyl-CoA O-methyltransferase 3 (242 aa).

Lys16 provides a ligand contact to substrate. Residues Thr58, Glu80, 82–83 (GV), Ser88, Asp106, and Ala135 contribute to the S-adenosyl-L-methionine site. Asp158 serves as a coordination point for substrate. A divalent metal cation is bound at residue Asp158. Asp160 serves as a coordination point for S-adenosyl-L-methionine. Residues Asp184 and Asn185 each contribute to the a divalent metal cation site. Substrate is bound at residue Asn189.

This sequence belongs to the class I-like SAM-binding methyltransferase superfamily. Cation-dependent O-methyltransferase family. CCoAMT subfamily. Mg(2+) serves as cofactor. As to expression, mostly expressed in the bottom and middle parts of the stems.

The enzyme catalyses (E)-caffeoyl-CoA + S-adenosyl-L-methionine = (E)-feruloyl-CoA + S-adenosyl-L-homocysteine + H(+). It participates in aromatic compound metabolism; phenylpropanoid biosynthesis. Methylates caffeoyl-CoA to feruloyl-CoA and 5-hydroxyferuloyl-CoA to sinapoyl-CoA. Plays a role in the synthesis of feruloylated polysaccharides. Involved in the reinforcement of the plant cell wall. Also involved in the responding to wounding or pathogen challenge by the increased formation of cell wall-bound ferulic acid polymers. Also methylates free caffeic and 5-hydroxyferulic acids. The sequence is that of Caffeoyl-CoA O-methyltransferase 3 (CCOAOMT3) from Nicotiana tabacum (Common tobacco).